We begin with the raw amino-acid sequence, 134 residues long: Protein NrdI (134 aa).

The protein belongs to the NrdI family.

Functionally, probably involved in ribonucleotide reductase function. This chain is Protein NrdI, found in Yersinia enterocolitica serotype O:8 / biotype 1B (strain NCTC 13174 / 8081).